Consider the following 270-residue polypeptide: Putative pyruvate, phosphate dikinase regulatory protein (270 aa).

Residue Gly-151–Thr-158 participates in ADP binding.

This sequence belongs to the pyruvate, phosphate/water dikinase regulatory protein family. PDRP subfamily.

It carries out the reaction N(tele)-phospho-L-histidyl/L-threonyl-[pyruvate, phosphate dikinase] + ADP = N(tele)-phospho-L-histidyl/O-phospho-L-threonyl-[pyruvate, phosphate dikinase] + AMP + H(+). The enzyme catalyses N(tele)-phospho-L-histidyl/O-phospho-L-threonyl-[pyruvate, phosphate dikinase] + phosphate + H(+) = N(tele)-phospho-L-histidyl/L-threonyl-[pyruvate, phosphate dikinase] + diphosphate. In terms of biological role, bifunctional serine/threonine kinase and phosphorylase involved in the regulation of the pyruvate, phosphate dikinase (PPDK) by catalyzing its phosphorylation/dephosphorylation. The chain is Putative pyruvate, phosphate dikinase regulatory protein from Ligilactobacillus salivarius (strain UCC118) (Lactobacillus salivarius).